The chain runs to 164 residues: Endoribonuclease YbeY (164 aa).

Zn(2+) contacts are provided by His111, His115, and His121. The disordered stretch occupies residues 142 to 164 (GYPDPYADDETETSPTVTTKDSE). Polar residues predominate over residues 154-164 (TSPTVTTKDSE).

The protein belongs to the endoribonuclease YbeY family. Requires Zn(2+) as cofactor.

Its subcellular location is the cytoplasm. In terms of biological role, single strand-specific metallo-endoribonuclease involved in late-stage 70S ribosome quality control and in maturation of the 3' terminus of the 16S rRNA. The sequence is that of Endoribonuclease YbeY from Pseudomonas fluorescens (strain Pf0-1).